We begin with the raw amino-acid sequence, 442 residues long: Histidine--tRNA ligase (442 aa).

The protein belongs to the class-II aminoacyl-tRNA synthetase family. As to quaternary structure, homodimer.

Its subcellular location is the cytoplasm. The enzyme catalyses tRNA(His) + L-histidine + ATP = L-histidyl-tRNA(His) + AMP + diphosphate + H(+). The sequence is that of Histidine--tRNA ligase from Helicobacter pylori (strain G27).